A 160-amino-acid chain; its full sequence is Cytochrome b6-f complex subunit 4 (160 aa).

Helical transmembrane passes span 36–56 (LLYMFPVVILGTLFCLVSLAV), 95–115 (LIGILLMAGVPVGLATVPFIE), and 131–151 (AVFLFGTLVAIWLGIGATLPI).

This sequence belongs to the cytochrome b family. PetD subfamily. In terms of assembly, the 4 large subunits of the cytochrome b6-f complex are cytochrome b6, subunit IV (17 kDa polypeptide, petD), cytochrome f and the Rieske protein, while the 4 small subunits are petG, petL, petM and petN. The complex functions as a dimer.

It is found in the plastid. The protein localises to the chloroplast thylakoid membrane. Functionally, component of the cytochrome b6-f complex, which mediates electron transfer between photosystem II (PSII) and photosystem I (PSI), cyclic electron flow around PSI, and state transitions. The chain is Cytochrome b6-f complex subunit 4 from Bigelowiella natans (Pedinomonas minutissima).